The sequence spans 249 residues: Aquaporin (249 aa).

Over 1–11 (MTRKWIKKLQS) the chain is Cytoplasmic. A helical membrane pass occupies residues 12–32 (YIGEFFASFIFGFAVYTSIIG). At 33–39 (SAQTGQS) the chain is on the extracellular side. The chain crosses the membrane as a helical span at residues 40 to 60 (AGPIIVALTIALSGVAIIYSF). At 61–83 (CDITVAHFNPAITFSAMCFRRLP) the chain is on the cytoplasmic side. The NPA signature appears at 69 to 71 (NPA). The helical transmembrane segment at 84–104 (FFGGIFIIIFQVAGFIIAGLA) threads the bilayer. Residues 105 to 133 (SVAVLPGKYKNKLEIARPKRVADNVSRGR) lie on the Extracellular side of the membrane. Residues 134-154 (IFGTEFFLTAILVYVAFAVGV) traverse the membrane as a helical segment. The Cytoplasmic portion of the chain corresponds to 155 to 179 (NPYTPPKDEHGDQLDPDEGLTEGRK). A helical transmembrane segment spans residues 180–200 (ITAPLAIGFTLGFCALLGIAS). At 201 to 223 (SGGAFNPGIVLSPMILTGTWDFW) the chain is on the extracellular side. The NPG signature appears at 206 to 208 (NPG). The chain crosses the membrane as a helical span at residues 224-246 (WVYLLGQFSGGLLGGGLQRFLLY). Topologically, residues 247–249 (KIF) are cytoplasmic.

The protein belongs to the MIP/aquaporin (TC 1.A.8) family.

The protein resides in the cell membrane. In terms of biological role, water channel required to facilitate the transport of water across membranes. Involved in osmotolerance. The chain is Aquaporin (AQP) from Vairimorpha ceranae (strain BRL01) (Microsporidian parasite).